A 318-amino-acid polypeptide reads, in one-letter code: Dehydrogenase/reductase SDR family member 7C-B (318 aa).

Positions Met1–Thr32 are cleaved as a signal peptide. NAD(+) is bound at residue Leu49 to Ile73. Ser186 contributes to the substrate binding site. The Proton acceptor role is filled by Tyr199.

This sequence belongs to the short-chain dehydrogenases/reductases (SDR) family.

Its subcellular location is the secreted. In terms of biological role, putative oxidoreductase. The polypeptide is Dehydrogenase/reductase SDR family member 7C-B (dhrs7cb) (Danio rerio (Zebrafish)).